The chain runs to 506 residues: GMP synthase [glutamine-hydrolyzing] (506 aa).

A Glutamine amidotransferase type-1 domain is found at 4-192 (KLIILDFGSQ…FLDICGMKRD (189 aa)). Catalysis depends on Cys79, which acts as the Nucleophile. Residues His167 and Glu169 contribute to the active site. The GMPS ATP-PPase domain occupies 193-381 (WTPASFIEAT…LGMMPHLIHR (189 aa)). 220–226 (SGGVDSS) lines the ATP pocket.

Homodimer.

It carries out the reaction XMP + L-glutamine + ATP + H2O = GMP + L-glutamate + AMP + diphosphate + 2 H(+). It functions in the pathway purine metabolism; GMP biosynthesis; GMP from XMP (L-Gln route): step 1/1. Catalyzes the synthesis of GMP from XMP. The polypeptide is GMP synthase [glutamine-hydrolyzing] (Porphyromonas gingivalis (strain ATCC 33277 / DSM 20709 / CIP 103683 / JCM 12257 / NCTC 11834 / 2561)).